The following is a 451-amino-acid chain: Chromosomal replication initiator protein DnaA (451 aa).

The domain I, interacts with DnaA modulators stretch occupies residues 1 to 77 (MTENEQIFWN…EVYNAQISVD (77 aa)). The domain II stretch occupies residues 77–110 (DYVFEEDLMIEQNQTKINQKPKQQALNSLPTVTS). The domain III, AAA+ region stretch occupies residues 111-329 (DLNPKYSFEN…GALKDISLVA (219 aa)). Residues glycine 155, glycine 157, lysine 158, and threonine 159 each contribute to the ATP site. Positions 330–451 (NFKQIDTITV…EIETIKNKIK (122 aa)) are domain IV, binds dsDNA.

Belongs to the DnaA family. As to quaternary structure, oligomerizes as a right-handed, spiral filament on DNA at oriC.

It localises to the cytoplasm. Functionally, plays an essential role in the initiation and regulation of chromosomal replication. ATP-DnaA binds to the origin of replication (oriC) to initiate formation of the DNA replication initiation complex once per cell cycle. Binds the DnaA box (a 9 base pair repeat at the origin) and separates the double-stranded (ds)DNA. Forms a right-handed helical filament on oriC DNA; dsDNA binds to the exterior of the filament while single-stranded (ss)DNA is stabiized in the filament's interior. The ATP-DnaA-oriC complex binds and stabilizes one strand of the AT-rich DNA unwinding element (DUE), permitting loading of DNA polymerase. After initiation quickly degrades to an ADP-DnaA complex that is not apt for DNA replication. Binds acidic phospholipids. The protein is Chromosomal replication initiator protein DnaA of Streptococcus pyogenes serotype M4 (strain MGAS10750).